A 148-amino-acid chain; its full sequence is 3-dehydroquinate dehydratase (148 aa).

Tyrosine 23 acts as the Proton acceptor in catalysis. Residues asparagine 75, histidine 81, and aspartate 88 each coordinate substrate. The Proton donor role is filled by histidine 101. Substrate contacts are provided by residues 102-103 and arginine 112; that span reads LS.

This sequence belongs to the type-II 3-dehydroquinase family. In terms of assembly, homododecamer.

It carries out the reaction 3-dehydroquinate = 3-dehydroshikimate + H2O. It participates in metabolic intermediate biosynthesis; chorismate biosynthesis; chorismate from D-erythrose 4-phosphate and phosphoenolpyruvate: step 3/7. In terms of biological role, catalyzes a trans-dehydration via an enolate intermediate. The sequence is that of 3-dehydroquinate dehydratase from Xylella fastidiosa (strain 9a5c).